The chain runs to 114 residues: Probable 4-amino-4-deoxy-L-arabinose-phosphoundecaprenol flippase subunit ArnE (114 aa).

3 helical membrane-spanning segments follow: residues 38–58 (LTLR…LLWL), 64–84 (LPLS…TLAA), and 94–114 (LRHW…SWHL). An EamA domain is found at 43–112 (LAIAVVSLGL…IMFGILLMSW (70 aa)).

The protein belongs to the ArnE family. In terms of assembly, heterodimer of ArnE and ArnF.

It is found in the cell inner membrane. The protein operates within bacterial outer membrane biogenesis; lipopolysaccharide biosynthesis. In terms of biological role, translocates 4-amino-4-deoxy-L-arabinose-phosphoundecaprenol (alpha-L-Ara4N-phosphoundecaprenol) from the cytoplasmic to the periplasmic side of the inner membrane. This Yersinia pseudotuberculosis serotype O:3 (strain YPIII) protein is Probable 4-amino-4-deoxy-L-arabinose-phosphoundecaprenol flippase subunit ArnE.